An 854-amino-acid polypeptide reads, in one-letter code: Disrupted in schizophrenia 1 protein (854 aa).

The segment covering M1–V18 has biased composition (gly residues). Disordered stretches follow at residues M1–S24, S179–A205, G221–E257, and A278–A323. The interaction with MAP1A stretch occupies residues M1–H292. Positions P197–H203 match the Interaction with FBXW7 motif. Basic and acidic residues predominate over residues S285 to P295. An interaction with TRAF3IP1 region spans residues S293–E696. The span at D296–L309 shows a compositional bias: low complexity. Coiled coils occupy residues E366–L394, I452–T505, and W602–E666. A Glycyl lysine isopeptide (Lys-Gly) (interchain with G-Cter in ubiquitin) cross-link involves residue K372. The tract at residues L440 to S597 is required for localization to punctate cytoplasmic foci. The tract at residues D446–A854 is necessary and sufficient for interaction with PCNT and localization at the centrosome. The interaction with ATF4 and ATF5 stretch occupies residues G598–A854. The segment at V716–E739 is disordered. An interaction with PAFAH1B1 region spans residues G727–A854. Positions S802–Q830 form a coiled coil. The interval S802 to A835 is interaction with NDEL1.

Interacts with NDEL1. Interacts with CCDC88A (via C-terminus); the interaction is direct. Interacts with GSK3B. Interacts with tubulin alpha, ACTN2, ANKHD1, ATF4, ATF5, CEP63, EIF3S3, MAP1A, NDEL1, PAFAH1B1, RANBP9, SPTBN4, SYNE1 and TRAF3IP1. Interaction with microtubules may be mediated in part by TRAF3IP1. Interacts (via C-terminal) with PCNT. Interacts with CHCHD6. Interacts with CCDC141. Interacts with FBXW7, the substrate-recognition component of a SCF (SKP1-CUL1-F-box protein) E3 ubiquitin-protein ligase complex; the interaction targets DISC1 for proteasomal degradation. Interacts with ZNF365. Interacts with ATF4; inhibiting ATF4 transcription factor activity by disrupting ATF4 dimerization and DNA-binding. Interacts with PDE4B (isoform PDE4B5). In terms of processing, ubiquitinated. Ubiquitination with 'Lys-48'-linked polyubiquitin chains leads to its proteasomal degradation. As to expression, ubiquitous. Highly expressed in the dentate gyrus of the hippocampus. Also expressed in the temporal and parahippocampal cortices and cells of the white matter.

It is found in the cytoplasm. It localises to the cytoskeleton. The protein localises to the mitochondrion. Its subcellular location is the microtubule organizing center. The protein resides in the centrosome. It is found in the postsynaptic density. Functionally, involved in the regulation of multiple aspects of embryonic and adult neurogenesis. Required for neural progenitor proliferation in the ventrical/subventrical zone during embryonic brain development and in the adult dentate gyrus of the hippocampus. Participates in the Wnt-mediated neural progenitor proliferation as a positive regulator by modulating GSK3B activity and CTNNB1 abundance. Plays a role as a modulator of the AKT-mTOR signaling pathway controlling the tempo of the process of newborn neurons integration during adult neurogenesis, including neuron positioning, dendritic development and synapse formation. Inhibits the activation of AKT-mTOR signaling upon interaction with CCDC88A. Regulates the migration of early-born granule cell precursors toward the dentate gyrus during the hippocampal development. Inhibits ATF4 transcription factor activity in neurons by disrupting ATF4 dimerization and DNA-binding. Plays a role, together with PCNT, in the microtubule network formation. The chain is Disrupted in schizophrenia 1 protein from Homo sapiens (Human).